The sequence spans 207 residues: MARSKTSQRWLKEHFDDPYVKMAQRDGYRSRASYKLLEIQEKDRILRPGMTVVDLGAAPGGWSQVTSRVIGDRGRLIASDILEMDSIPDVTFIQGDFTEDAVFARILEAIGDHPVDLVISDMAPNMSGVRAADQPRAMYLCELALDLAGRVLRPGGDFLIKIFQGEGFDQYHKQAREMFDKVQMRKPLSSRDRSREQYLLARGFRGE.

S-adenosyl-L-methionine-binding residues include Gly-60, Trp-62, Asp-80, Asp-96, and Asp-121. The active-site Proton acceptor is Lys-161.

This sequence belongs to the class I-like SAM-binding methyltransferase superfamily. RNA methyltransferase RlmE family.

It is found in the cytoplasm. It catalyses the reaction uridine(2552) in 23S rRNA + S-adenosyl-L-methionine = 2'-O-methyluridine(2552) in 23S rRNA + S-adenosyl-L-homocysteine + H(+). Specifically methylates the uridine in position 2552 of 23S rRNA at the 2'-O position of the ribose in the fully assembled 50S ribosomal subunit. This chain is Ribosomal RNA large subunit methyltransferase E, found in Pseudomonas aeruginosa (strain UCBPP-PA14).